Reading from the N-terminus, the 130-residue chain is MATIQYYGTGRRKEAVARVRLMPGKGNIIINNKSLEEYFPLETLRYTVKQPLILTETIDKFDVYVKVSGGGLSGQAGAIRHGIARALVKADAELRPILKKAGFLTRDPRMKERRKYGLKKARKAPQFSKR.

Positions 109–130 (RMKERRKYGLKKARKAPQFSKR) are disordered. The segment covering 111 to 130 (KERRKYGLKKARKAPQFSKR) has biased composition (basic residues).

The protein belongs to the universal ribosomal protein uS9 family.

This Caldanaerobacter subterraneus subsp. tengcongensis (strain DSM 15242 / JCM 11007 / NBRC 100824 / MB4) (Thermoanaerobacter tengcongensis) protein is Small ribosomal subunit protein uS9.